A 311-amino-acid chain; its full sequence is Urease accessory protein UreD (311 aa).

The protein belongs to the UreD family. In terms of assembly, ureD, UreF and UreG form a complex that acts as a GTP-hydrolysis-dependent molecular chaperone, activating the urease apoprotein by helping to assemble the nickel containing metallocenter of UreC. The UreE protein probably delivers the nickel.

It is found in the cytoplasm. Required for maturation of urease via the functional incorporation of the urease nickel metallocenter. This chain is Urease accessory protein UreD, found in Synechococcus sp. (strain CC9902).